Consider the following 941-residue polypeptide: MDKIEVRGARTHNLKNINLVIPRDKLIVVTGLSGSGKSSLAFDTLYAEGQRRYVESLSAYARQFLSLMEKPDVDHIEGLSPAISIEQKSTSHNPRSTVGTITEIHDYLRLLFARVGEPRCPDHDVPLAAQTVSQMVDNVLSQPEGKRLMLLAPIIKERKGEHTKTLENLASQGYIRARIDGEVCDLSDPPKLELQKKHTIEVVIDRFKVRNDLSQRLAESFETALELSGGTAVVADMDDEKAEELLFSANFACPICGYSMRELEPRLFSFNNPAGACPTCDGLGVQQYFDPDRVIQNPDLSLAGGAIRGWDRRNFYYFQMLKSLAEHYKFDVDAPWASLSANVHKVVLYGSGKENIEFKYMNDRGDTSVRRHPFEGVLHNMERRYKETESSAVREELAKFISNRPCASCEGTRLNREARHVFVENTPLPAISDMSIGHAMDFFTNLKLSGQRAKIAEKVLKEIGDRLKFLVNVGLNYLTLSRSAETLSGGEAQRIRLASQIGAGLVGVMYVLDEPSIGLHQRDNERLLGTLIHLRNLGNTVIVVEHDEDAIRAADHVIDIGPGAGVHGGEVVAEGPLEAIMAVPESLTGQYMSGKRKIEVPKQRVPANPEKVLKLTGARGNNLKDVTLTLPVGLFTCITGVSGSGKSTLINDTLFPIAQRQLNGATIAEPAPYRDIQGLEHFDKVIDIDQSPIGRTPRSNPATYTGVFTPVRELFAGVPESRSRGYTPGRFSFNVRGGRCEACQGDGVIKVEMHFLPDIYVPCDQCKGKRYNRETLEIKYKGKTIHEVLDMTIEEAREFFDAVPALARKLQTLMDVGLTYIRLGQSATTLSGGEAQRVKLARELSKRGTGQTLYILDEPTTGLHFADIQQLLDVLHQLRDQGNTIVVIEHNLDVIKTADWIVDLGPEGGSGGGEILVAGTPETVAECEASHTARFLKPMLK.

Gly31–Ser38 lines the ATP pocket. The C4-type zinc finger occupies Cys253–Cys280. 2 ABC transporter domains span residues Trp310 to Leu587 and Ala607 to Lys937. Gly640–Ser647 contacts ATP. A C4-type zinc finger spans residues Cys740–Cys766.

This sequence belongs to the ABC transporter superfamily. UvrA family. Forms a heterotetramer with UvrB during the search for lesions.

It is found in the cytoplasm. The UvrABC repair system catalyzes the recognition and processing of DNA lesions. UvrA is an ATPase and a DNA-binding protein. A damage recognition complex composed of 2 UvrA and 2 UvrB subunits scans DNA for abnormalities. When the presence of a lesion has been verified by UvrB, the UvrA molecules dissociate. This is UvrABC system protein A from Salmonella typhi.